The following is a 229-amino-acid chain: UPF0500 protein C1orf216 (229 aa).

The segment at 1–144 (MFAIQPGLAE…RGPGPPDPLL (144 aa)) is disordered. Positions 62–71 (SESPSDNQAF) are enriched in polar residues. 2 stretches are compositionally biased toward low complexity: residues 84 to 93 (PPEGAEIPGA) and 115 to 126 (SSSLSIDSRSSS).

It belongs to the UPF0500 family.

This is UPF0500 protein C1orf216 (C1orf216) from Homo sapiens (Human).